Consider the following 142-residue polypeptide: Large ribosomal subunit protein uL16 (142 aa).

The protein belongs to the universal ribosomal protein uL16 family. In terms of assembly, part of the 50S ribosomal subunit.

Binds 23S rRNA and is also seen to make contacts with the A and possibly P site tRNAs. In Thermotoga maritima (strain ATCC 43589 / DSM 3109 / JCM 10099 / NBRC 100826 / MSB8), this protein is Large ribosomal subunit protein uL16.